An 86-amino-acid chain; its full sequence is Elicitor peptide 5 (86 aa).

A propeptide spanning residues 1–59 (MQQERDHKRDCCKLMPQTVKAFFKCLRFRRSSSSSSDMVKARARNEEKEEPSSIETSTR) is cleaved from the precursor. Residues 31-86 (SSSSSSDMVKARARNEEKEEPSSIETSTRSLNVMRKGIRKQPVSSGKRGGVNDYDM) form a disordered region. Residues 39 to 51 (VKARARNEEKEEP) are compositionally biased toward basic and acidic residues.

It belongs to the brassicaceae elicitor peptide family.

In terms of biological role, elicitor of plant defense. The sequence is that of Elicitor peptide 5 (PEP5) from Arabidopsis thaliana (Mouse-ear cress).